Reading from the N-terminus, the 21-residue chain is Peptide PGLa-R6 (21 aa).

Leucine 21 carries the post-translational modification Leucine amide.

Expressed by the skin glands.

The protein localises to the secreted. Antimicrobial peptide. The polypeptide is Peptide PGLa-R6 (Xenopus ruwenzoriensis (Uganda clawed frog)).